The sequence spans 1013 residues: PHD finger protein 20-like protein 1 (1013 aa).

The Tudor 1 domain occupies 11 to 71 (ITFEIGARLE…SNRLRPLERP (61 aa)). Residues Lys75 and Lys79 each participate in a glycyl lysine isopeptide (Lys-Gly) (interchain with G-Cter in SUMO2) cross-link. A Tudor 2 domain is found at 85–141 (FDFKAGEEVLARWTDCRYYPAKIEAINKEGTFTVQFYDGVIRCLKRMHIKAMPEDAK). 4 disordered regions span residues 183 to 206 (AKNKTGTKPRASANSNKEKERDGG), 309 to 368 (EQAI…TPKS), 389 to 454 (VINK…QSSV), and 482 to 511 (VTGSRTPHPSYHGGECPREEKEETPLFANP). The span at 315–346 (KPQSQKKNEAVISSSANTQKPALLSSTLSSGK) shows a compositional bias: polar residues. Ser368 carries the post-translational modification Phosphoserine. The segment covering 404–415 (PCKHSERRRRSQ) has biased composition (basic residues). Ser432 bears the Phosphoserine mark. Low complexity predominate over residues 443 to 453 (SISSQNQQQSS). A compositionally biased stretch (basic and acidic residues) spans 496-505 (ECPREEKEET). A Glycyl lysine isopeptide (Lys-Gly) (interchain with G-Cter in SUMO2) cross-link involves residue Lys530. A compositionally biased stretch (basic and acidic residues) spans 533–565 (KKVKLEEKTSTAFGKRKEKDKEKKEKRDKDHYK). Positions 533–585 (KKVKLEEKTSTAFGKRKEKDKEKKEKRDKDHYKPKQKKKKKKKKKSKQHDYSD) are disordered. Positions 566-579 (PKQKKKKKKKKKSK) are enriched in basic residues. The PHD-type zinc-finger motif lies at 681 to 729 (IVRCICELDEENGFMIQCEECLCWQHSVCMGLLEDSIPEQYICYICRDP). Residues 824–852 (RKITPQDRANSEGKECVQNHKEPALRMEE) show a composition bias toward basic and acidic residues. Residues 824 to 911 (RKITPQDRAN…LLYKNRGVSE (88 aa)) form a disordered region. Residues 854 to 878 (YITSEHSYQKPQSFSQDCQSLTDPG) show a composition bias toward polar residues. A compositionally biased stretch (acidic residues) spans 879–892 (SSDDDDASSFEEDG). The residue at position 905 (Lys905) is an N6-acetyllysine.

As to quaternary structure, interacts with methylated DNMT1 (DNMT1K142me1). Interacts with SOX2.

It localises to the nucleus. Functionally, is a negative regulator of proteasomal degradation of a set of methylated proteins, including DNMT1 and SOX2. Involved in the maintainance of embryonic stem cells pluripotency, through the regulation of SOX2 levels. This is PHD finger protein 20-like protein 1 (Phf20l1) from Mus musculus (Mouse).